Consider the following 775-residue polypeptide: ADP-ribosylation factor GTPase-activating protein AGD4 (775 aa).

The BAR domain maps to 2-226 (ATFINLEDSP…IHQILTYAQQ (225 aa)). The 134-residue stretch at 288 to 421 (EVIKQGYLLK…WVNKITKAIG (134 aa)) folds into the PH domain. The 137-residue stretch at 467 to 603 (DDVSTILRGL…ALVIKDESEA (137 aa)) folds into the Arf-GAP domain. A C4-type zinc finger spans residues 482–505 (CAECNAPEPDWASLNLGVLLCIQC). ANK repeat units lie at residues 682 to 711 (QGCS…DLNI) and 715 to 744 (HGRT…RPSI).

As to expression, expressed in roots, hypocotyls, cotyledons, leaf and shoot apical meristems and siliques.

Functionally, probable GTPase-activating protein. The polypeptide is ADP-ribosylation factor GTPase-activating protein AGD4 (AGD4) (Arabidopsis thaliana (Mouse-ear cress)).